A 115-amino-acid polypeptide reads, in one-letter code: MEIIMIFVSGILTSISVYLVLSKSLIRIIMGTTLLTHAANLFLITMGGLKHGTVPIFEKGTSSYVDPIPQALILTAIVIAFATTAFFLVLAFRTYKELGTDNVELMKGAPEDDRE.

A run of 3 helical transmembrane segments spans residues 1–21 (MEII…YLVL), 28–48 (IIMG…TMGG), and 72–92 (LILT…VLAF).

It belongs to the CPA3 antiporters (TC 2.A.63) subunit C family. May form a heterooligomeric complex that consists of seven subunits: mnhA1, mnhB1, mnhC1, mnhD1, mnhE1, mnhF1 and mnhG1.

It is found in the cell membrane. Its function is as follows. Mnh complex is a Na(+)/H(+) antiporter involved in Na(+) excretion. This chain is Na(+)/H(+) antiporter subunit C1 (mnhC1), found in Staphylococcus epidermidis (strain ATCC 35984 / DSM 28319 / BCRC 17069 / CCUG 31568 / BM 3577 / RP62A).